A 67-amino-acid chain; its full sequence is Cell division protein ZapB (67 aa).

A coiled-coil region spans residues 3–59 (LELLSKLETKIQAALETIELLKMELEEEKQTSSSLSEQNQQLQQELTSWNEKVTGLV).

This sequence belongs to the ZapB family. Homodimer. The ends of the coiled-coil dimer bind to each other, forming polymers. Interacts with FtsZ.

It localises to the cytoplasm. Its function is as follows. Non-essential, abundant cell division factor that is required for proper Z-ring formation. It is recruited early to the divisome by direct interaction with FtsZ, stimulating Z-ring assembly and thereby promoting cell division earlier in the cell cycle. Its recruitment to the Z-ring requires functional FtsA or ZipA. The sequence is that of Cell division protein ZapB from Shewanella halifaxensis (strain HAW-EB4).